Reading from the N-terminus, the 232-residue chain is Protein FAM228B (232 aa).

It belongs to the FAM228 family.

The sequence is that of Protein FAM228B (Fam228b) from Mus musculus (Mouse).